The following is a 276-amino-acid chain: NH(3)-dependent NAD(+) synthetase (276 aa).

43–50 (GISGGVDS) lines the ATP pocket. Position 49 (Asp-49) interacts with Mg(2+). Arg-146 serves as a coordination point for deamido-NAD(+). An ATP-binding site is contributed by Thr-166. Glu-171 serves as a coordination point for Mg(2+). Deamido-NAD(+) is bound by residues Lys-179 and Asp-186. Residues Lys-195 and Thr-217 each contribute to the ATP site. A deamido-NAD(+)-binding site is contributed by 266–267 (HK).

This sequence belongs to the NAD synthetase family. Homodimer.

It carries out the reaction deamido-NAD(+) + NH4(+) + ATP = AMP + diphosphate + NAD(+) + H(+). It participates in cofactor biosynthesis; NAD(+) biosynthesis; NAD(+) from deamido-NAD(+) (ammonia route): step 1/1. Its function is as follows. Catalyzes the ATP-dependent amidation of deamido-NAD to form NAD. Uses ammonia as a nitrogen source. The chain is NH(3)-dependent NAD(+) synthetase from Shewanella woodyi (strain ATCC 51908 / MS32).